The following is a 460-amino-acid chain: Elongation factor 1-alpha (460 aa).

Glycine 2 is modified (n,N,N-trimethylglycine). Position 3 is an N6,N6-dimethyllysine; alternate (lysine 3). Lysine 3 carries the post-translational modification N6-methyllysine; alternate. Residues 6-241 (KTHINLVVIG…DAIDPPTRPT (236 aa)) enclose the tr-type G domain. Residues 15–22 (GHVDSGKS) form a G1 region. 15–22 (GHVDSGKS) contributes to the GTP binding site. At lysine 31 the chain carries N6-methyllysine. Residues 71-75 (GITID) are G2. Lysine 80 bears the N6,N6,N6-trimethyllysine mark. Residues 92-95 (DAPG) are G3. Residues 92-96 (DAPGH) and 154-157 (NKMD) each bind GTP. The G4 stretch occupies residues 154–157 (NKMD). A G5 region spans residues 193–195 (SGF). Position 317 is an N6,N6-dimethyllysine; alternate (lysine 317). Lysine 317 carries the post-translational modification N6-methyllysine; alternate. N6-methyllysine is present on lysine 391.

It belongs to the TRAFAC class translation factor GTPase superfamily. Classic translation factor GTPase family. EF-Tu/EF-1A subfamily.

The protein localises to the cytoplasm. In terms of biological role, this protein promotes the GTP-dependent binding of aminoacyl-tRNA to the A-site of ribosomes during protein biosynthesis. This is Elongation factor 1-alpha (TEF) from Coccidioides immitis (strain RS) (Valley fever fungus).